A 333-amino-acid chain; its full sequence is MTDQAFVTLTTNDAYAKGALVLGSSLKQHRTSRRLAVLTTPQVSDTMRKALEIVFDEVITVDILDSGDSAHLTLMKRPELGVTLTKLHCWSLTQYSKCVFMDADTLVLANIDDLFEREELSAAPDPGWPDCFNSGVFVYQPSVETYNQLLHVASEQGSFDGGDQGLLNTFFNSWATTDIRKHLPFIYNLSSISIYSYLPAFKAFGANAKVVHFLGQTKPWNYTYDTKTKSVRSEGHDPTMTHPQFLNVWWDIFTTSVVPLLQQFGLVQDTCSYQHVEDVSGAVSHLSLGETPATTQPFVSSEERKERWEQGQADYMGADSFDNIKKKLDTYLQ.

T2 is modified (N-acetylthreonine). UDP is bound by residues L9, T11, N12, and Y15. Positions 9, 11, 12, and 15 each coordinate UDP-alpha-D-glucose. S44 carries the post-translational modification Phosphoserine; by PKA; in vitro. R77 serves as a coordination point for UDP. UDP-alpha-D-glucose is bound by residues R77, K86, D102, A103, D104, N133, S134, D160, D163, and Q164. UDP contacts are provided by D102, A103, and D104. Mn(2+) is bound at residue D102. Position 104 (D104) interacts with Mn(2+). Y195 is a glycosylation site (O-linked (Glc...) tyrosine). Positions 212, 215, and 218 each coordinate UDP. H212 contributes to the Mn(2+) binding site. Positions 215 and 218 each coordinate UDP-alpha-D-glucose. An interaction with GYS1 region spans residues 284-316 (SHLSLGETPATTQPFVSSEERKERWEQGQADYM).

This sequence belongs to the glycosyltransferase 8 family. Glycogenin subfamily. In terms of assembly, part of the GYS1-GYG1 complex, a heterooctamer composed of a tetramer of GYS1 and 2 dimers of GYG1, where each GYS1 protomer binds to one GYG1 subunit (via GYG1 C-terminus); the GYS1 tetramer may dissociate from GYG1 dimers to continue glycogen polymerization on its own. May also form a heterooctamer complex with GYS2 (via GYG1 C-terminus). Mn(2+) is required as a cofactor. Post-translationally, self-glycosylated by the transfer of glucose residues from UDP-glucose to itself, forming an alpha-1,4-glycan of around 10 residues attached to Tyr-195. In terms of processing, phosphorylated. In terms of tissue distribution, detected in heart, skeletal muscle, brain and testis, and at lower levels in kidney.

It is found in the cytoplasm. Its subcellular location is the nucleus. The enzyme catalyses L-tyrosyl-[glycogenin] + UDP-alpha-D-glucose = alpha-D-glucosyl-L-tyrosyl-[glycogenin] + UDP + H(+). The catalysed reaction is [1,4-alpha-D-glucosyl](n)-L-tyrosyl-[glycogenin] + UDP-alpha-D-glucose = [1,4-alpha-D-glucosyl](n+1)-L-tyrosyl-[glycogenin] + UDP + H(+). Its pathway is glycan biosynthesis; glycogen biosynthesis. In terms of biological role, glycogenin participates in the glycogen biosynthetic process along with glycogen synthase and glycogen branching enzyme. It catalyzes the formation of a short alpha (1,4)-glucosyl chain covalently attached via a glucose 1-O-tyrosyl linkage to internal tyrosine residues and these chains act as primers for the elongation reaction catalyzed by glycogen synthase. This Oryctolagus cuniculus (Rabbit) protein is Glycogenin-1 (GYG1).